We begin with the raw amino-acid sequence, 340 residues long: Protein RecA (340 aa).

74–81 (GPESSGKT) lines the ATP pocket.

It belongs to the RecA family.

It is found in the cytoplasm. Can catalyze the hydrolysis of ATP in the presence of single-stranded DNA, the ATP-dependent uptake of single-stranded DNA by duplex DNA, and the ATP-dependent hybridization of homologous single-stranded DNAs. It interacts with LexA causing its activation and leading to its autocatalytic cleavage. This chain is Protein RecA, found in Porphyromonas gingivalis (strain ATCC 33277 / DSM 20709 / CIP 103683 / JCM 12257 / NCTC 11834 / 2561).